Reading from the N-terminus, the 67-residue chain is Large ribosomal subunit protein uL29 (67 aa).

Belongs to the universal ribosomal protein uL29 family.

In Thermus thermophilus, this protein is Large ribosomal subunit protein uL29 (rpmC).